The chain runs to 670 residues: MGYESNRSFNKATGAGFIIAMGIVYGDIGTSPLYTMESIVQGQGGLERISETSIIGALSLIIWTLTLITTVKYVWIALKADNNHEGGIFSLFTLVRKYAKWLIIPAMIGGAALLSDGALTPAVTVTSAIEGLRSIPAFHEAFGQQQLPIVIITLAILAVLFLIQRFGTSIVGKVFGPVMFIWFSFLGITGLINLFGDFSVLQAINPYWAIHLLLSPENKAGIFVLGSVFLATTGAEALYSDLGHVGRGNIHVSWPFVKVCIILSYCGQGAWLLQNRGKSLGDINPFFAVLPQNLIIFSVILATLAAIIASQALISGSFTLVSEAIRLKLLPRLRIFYPGETFGQLYIPAVNLGLWLAASFIVVYFQSSAHMEAAYGLAITVTMLMTTTLLTVYLSHYQKVKKVLVGLFFTVFIFIEGLFFAASAVKFMHGGYVVVIIAAMILFVMAIWHKSDQLFYKYLNSSNLNDYKEQMDKLRKDETYDLYHTNVVYLTAKMDKEWIDRSILYSILDKRPKKAKVYWFVKVNVTDEPYTSEYEVDMLGTDFIVCVNLYLGFHMRQEIPRYLRTIVTNLMESGRLPQQNQTYSITPGRKVGDFRFIILEEKLINARQMPGFERFVLQTKEQIKKITASPARWFGLHFSEVTVETVPLVLSDVKNLEIHERISEENQGES.

The next 13 membrane-spanning stretches (helical) occupy residues Gly-14 to Tyr-34, Leu-58 to Leu-78, Trp-101 to Pro-121, Leu-147 to Gly-167, Phe-175 to Phe-195, Gly-196 to Pro-216, Ala-220 to Ser-240, Val-252 to Leu-272, Leu-294 to Ile-314, Leu-345 to Phe-365, Ala-374 to Leu-394, Val-403 to Ser-423, and Phe-427 to Ile-447.

Belongs to the HAK/KUP transporter (TC 2.A.72) family.

The protein resides in the cell membrane. It carries out the reaction K(+)(in) + H(+)(in) = K(+)(out) + H(+)(out). Its function is as follows. Transport of potassium into the cell. Likely operates as a K(+):H(+) symporter. This Lactococcus lactis subsp. lactis (strain IL1403) (Streptococcus lactis) protein is Probable potassium transport system protein Kup 1.